The following is a 345-amino-acid chain: Dihydroorotase (345 aa).

Residues His13 and His15 each coordinate Zn(2+). Substrate-binding positions include 15–17 (HFR) and Asn41. Zn(2+)-binding residues include Lys98, His135, and His173. Lys98 carries the N6-carboxylysine modification. Residue His135 participates in substrate binding. Leu218 is a substrate binding site. Asp246 is a binding site for Zn(2+). Residue Asp246 is part of the active site. The substrate site is built by His250 and Ala262.

The protein belongs to the metallo-dependent hydrolases superfamily. DHOase family. Class II DHOase subfamily. In terms of assembly, homodimer. It depends on Zn(2+) as a cofactor.

The catalysed reaction is (S)-dihydroorotate + H2O = N-carbamoyl-L-aspartate + H(+). Its pathway is pyrimidine metabolism; UMP biosynthesis via de novo pathway; (S)-dihydroorotate from bicarbonate: step 3/3. Its function is as follows. Catalyzes the reversible cyclization of carbamoyl aspartate to dihydroorotate. The protein is Dihydroorotase of Shewanella halifaxensis (strain HAW-EB4).